The chain runs to 238 residues: Small ribosomal subunit protein eS4 (238 aa).

The 72-residue stretch at Ile38–Pro109 folds into the S4 RNA-binding domain.

Belongs to the eukaryotic ribosomal protein eS4 family.

The protein is Small ribosomal subunit protein eS4 of Pyrobaculum neutrophilum (strain DSM 2338 / JCM 9278 / NBRC 100436 / V24Sta) (Thermoproteus neutrophilus).